A 419-amino-acid polypeptide reads, in one-letter code: Haloacid dehalogenase-like hydrolase domain-containing 5 (419 aa).

Positions 1-15 (MAALAGLGVLGAGRH) are cleaved as a signal peptide.

It belongs to the HAD-like hydrolase superfamily.

This is Haloacid dehalogenase-like hydrolase domain-containing 5 from Mus musculus (Mouse).